Here is an 807-residue protein sequence, read N- to C-terminus: Tyrosine-protein phosphatase non-receptor type 22 (807 aa).

In terms of domain architecture, Tyrosine-protein phosphatase spans 24 to 289; it reads FANEFLKLKR…ELVYNAVLEL (266 aa). Position 35 is a phosphoserine; by PKC/PRKCD (serine 35). The cysteines at positions 129 and 227 are disulfide-linked. Cysteine 227 (phosphocysteine intermediate) is an active-site residue. Substrate-binding positions include 227–233 and glutamine 274; that span reads CSAGCGR. Residues serine 449, serine 635, serine 684, and serine 692 each carry the phosphoserine modification. Disordered regions lie at residues 676–700 and 724–746; these read SVKLRSPKSELHQDRSSPPPPLPER and SYPDTMENSTSSKQTLKTPGKSF.

Belongs to the protein-tyrosine phosphatase family. Non-receptor class 4 subfamily. In terms of assembly, interacts with CSK. Interacts with LPXN. Interacts with CBL. Interacts with TRAF3 (via MATH domain); the interaction promotes TRAF3 polyubiquitination. In terms of processing, phosphorylation on Ser-35 by PKC/PRKCD abrogates its ability to dephosphorylate and inactivate the SRC family kinases. In terms of tissue distribution, expressed in bone marrow, B and T-cells, PBMCs, natural killer cells, monocytes, dendritic cells and neutrophils. Both isoform 1 and 4 are predominantly expressed in lymphoid tissues and cells. Isoform 1 is expressed in thymocytes and both mature B and T-cells.

Its subcellular location is the cytoplasm. The enzyme catalyses O-phospho-L-tyrosyl-[protein] + H2O = L-tyrosyl-[protein] + phosphate. The catalysed reaction is N-(5Z,8Z,11Z,14Z-eicosatetraenoyl)-ethanolamine phosphate + H2O = N-(5Z,8Z,11Z,14Z-eicosatetraenoyl)-ethanolamine + phosphate. Its activity is regulated as follows. Down-regulated by phosphorylation. Its function is as follows. Acts as a negative regulator of T-cell receptor (TCR) signaling by direct dephosphorylation of the Src family kinases LCK and FYN, ITAMs of the TCRz/CD3 complex, as well as ZAP70, VAV, VCP and other key signaling molecules. Associates with and probably dephosphorylates CBL. Dephosphorylates LCK at its activating 'Tyr-394' residue. Dephosphorylates ZAP70 at its activating 'Tyr-493' residue. Dephosphorylates the immune system activator SKAP2. Positively regulates toll-like receptor (TLR)-induced type 1 interferon production. Promotes host antiviral responses mediated by type 1 interferon. Regulates NOD2-induced pro-inflammatory cytokine secretion and autophagy. Acts as an activator of NLRP3 inflammasome assembly by mediating dephosphorylation of 'Tyr-861' of NLRP3. Dephosphorylates phospho-anandamide (p-AEA), an endocannabinoid to anandamide (also called N-arachidonoylethanolamide). This Homo sapiens (Human) protein is Tyrosine-protein phosphatase non-receptor type 22 (PTPN22).